The chain runs to 433 residues: Energy-coupling factor transporter ATP-binding protein EcfA2 (433 aa).

An ABC transporter domain is found at 25–389 (VRVKNLYAVY…QHIINSTSIQ (365 aa)). 62–69 (GNSGSGKS) serves as a coordination point for ATP.

Belongs to the ABC transporter superfamily. Energy-coupling factor EcfA family. As to quaternary structure, forms a stable energy-coupling factor (ECF) transporter complex composed of 2 membrane-embedded substrate-binding proteins (S component), 2 ATP-binding proteins (A component) and 2 transmembrane proteins (T component).

The protein localises to the cell membrane. Functionally, ATP-binding (A) component of a common energy-coupling factor (ECF) ABC-transporter complex. Unlike classic ABC transporters this ECF transporter provides the energy necessary to transport a number of different substrates. The sequence is that of Energy-coupling factor transporter ATP-binding protein EcfA2 from Ureaplasma parvum serovar 3 (strain ATCC 700970).